A 167-amino-acid polypeptide reads, in one-letter code: Crossover junction endodeoxyribonuclease RuvC (167 aa).

Active-site residues include Asp14, Glu75, and Asp147. Mg(2+) is bound by residues Asp14, Glu75, and Asp147.

This sequence belongs to the RuvC family. As to quaternary structure, homodimer which binds Holliday junction (HJ) DNA. The HJ becomes 2-fold symmetrical on binding to RuvC with unstacked arms; it has a different conformation from HJ DNA in complex with RuvA. In the full resolvosome a probable DNA-RuvA(4)-RuvB(12)-RuvC(2) complex forms which resolves the HJ. Mg(2+) serves as cofactor.

The protein resides in the cytoplasm. The catalysed reaction is Endonucleolytic cleavage at a junction such as a reciprocal single-stranded crossover between two homologous DNA duplexes (Holliday junction).. In terms of biological role, the RuvA-RuvB-RuvC complex processes Holliday junction (HJ) DNA during genetic recombination and DNA repair. Endonuclease that resolves HJ intermediates. Cleaves cruciform DNA by making single-stranded nicks across the HJ at symmetrical positions within the homologous arms, yielding a 5'-phosphate and a 3'-hydroxyl group; requires a central core of homology in the junction. The consensus cleavage sequence is 5'-(A/T)TT(C/G)-3'. Cleavage occurs on the 3'-side of the TT dinucleotide at the point of strand exchange. HJ branch migration catalyzed by RuvA-RuvB allows RuvC to scan DNA until it finds its consensus sequence, where it cleaves and resolves the cruciform DNA. This Synechocystis sp. (strain ATCC 27184 / PCC 6803 / Kazusa) protein is Crossover junction endodeoxyribonuclease RuvC.